The sequence spans 209 residues: Segregation and condensation protein B (209 aa).

The protein belongs to the ScpB family. As to quaternary structure, homodimer. Homodimerization may be required to stabilize the binding of ScpA to the Smc head domains. Component of a cohesin-like complex composed of ScpA, ScpB and the Smc homodimer, in which ScpA and ScpB bind to the head domain of Smc. The presence of the three proteins is required for the association of the complex with DNA.

The protein resides in the cytoplasm. In terms of biological role, participates in chromosomal partition during cell division. May act via the formation of a condensin-like complex containing Smc and ScpA that pull DNA away from mid-cell into both cell halves. This Geobacillus thermodenitrificans (strain NG80-2) protein is Segregation and condensation protein B.